A 633-amino-acid chain; its full sequence is MPDNLSLHLSGSSKRLNSRQLMESSNETFAPNNVDLEKEYKSSQSNITTEVYEASSFEEKVSSEKPQYSSFWKKIYYEYVVVDKSILGVSILDSFMYNQDLKPVEKERRVWSWYNYCYFWLAECFNINTWQIAATGLQLGLNWWQCWITIWIGYGFVGAFVVLASRVGSAYHLSFPISSRASFGIFFSLWPVINRVVMAIVWYSVQAYIAATPVSLMLKSIFGKDLQDKIPDHFGSPNATTYEFMCFFIFWAASLPFLLVPPHKIRHLFTVKAVLVPFASFGFLIWAIRRAHGRIALGSLTDVQPHGSAFSWAFLRSLMGCMANFSTMVINAPDFSRFSKNPNSALWSQLVCIPFLFSITCLIGILVTAAGYEIYGINYWSPLDVLEKFLQTTYNKGTRAGVFLISFVFAVAQLGTNISANSLSCGTDMSAIFPKFINIKRGSLFCAAMALCICPWNLMATSSKFTMALSAYAIFLSSIAGVVCSDYFVVRRGYIKLTHIYSHQKGSFYMYGNRFGINWRALAAYLCGVAPCLPGFIAEVGAPAIKVSDGAMKLYYLSYWVGYGLSFSSYTALCYFFPVPGCPVNNIIKDKGWFQRWANVDDFEEEWKDTIERDDLVDDNISVYEHEHEKTFI.

12 consecutive transmembrane segments (helical) span residues 143–163 (WWQCWITIWIGYGFVGAFVVL), 173–193 (LSFPISSRASFGIFFSLWPVI), 197–217 (VMAIVWYSVQAYIAATPVSLM), 242–262 (YEFMCFFIFWAASLPFLLVPP), 268–288 (LFTVKAVLVPFASFGFLIWAI), 310–330 (FSWAFLRSLMGCMANFSTMVI), 350–370 (LVCIPFLFSITCLIGILVTAA), 400–420 (AGVFLISFVFAVAQLGTNISA), 442–462 (GSLFCAAMALCICPWNLMATS), 465–485 (FTMALSAYAIFLSSIAGVVCS), 521–541 (ALAAYLCGVAPCLPGFIAEVG), and 559–579 (YWVGYGLSFSSYTALCYFFPV).

Belongs to the purine-cytosine permease (2.A.39) family. Glycosylated (possible); but there is not yet direct biochemical evidence for it.

The protein localises to the membrane. Transport of uracil. The protein is Uracil permease (FUR4) of Saccharomyces cerevisiae (strain ATCC 204508 / S288c) (Baker's yeast).